The primary structure comprises 358 residues: Mesaconyl-CoA hydratase (358 aa).

Belongs to the enoyl-CoA hydratase/isomerase family. Homodimer.

The catalysed reaction is (2R,3S)-beta-methylmalyl-CoA = 2-methylfumaryl-CoA + H2O. With respect to regulation, shows highest activity at 0.5 M KCl. Does not require divalent ions for activity. Involved in the methylaspartate cycle. Catalyzes the reversible hydration of mesaconyl-CoA (2-methylfumaryl-CoA) to yield beta-methylmalyl-CoA ((2R,3S)-beta-methylmalyl-CoA). Also shows activity with mesaconyl-C4-CoA (3-methylfumaryl-CoA), (S)-citramalyl-CoA and (S)-malyl-CoA. In Haloarcula hispanica (strain ATCC 33960 / DSM 4426 / JCM 8911 / NBRC 102182 / NCIMB 2187 / VKM B-1755), this protein is Mesaconyl-CoA hydratase.